Here is a 471-residue protein sequence, read N- to C-terminus: ATP synthase subunit beta (471 aa).

153–160 (GGAGVGKT) is an ATP binding site.

Belongs to the ATPase alpha/beta chains family. As to quaternary structure, F-type ATPases have 2 components, CF(1) - the catalytic core - and CF(0) - the membrane proton channel. CF(1) has five subunits: alpha(3), beta(3), gamma(1), delta(1), epsilon(1). CF(0) has four main subunits: a(1), b(1), b'(1) and c(9-12).

The protein localises to the cell membrane. The catalysed reaction is ATP + H2O + 4 H(+)(in) = ADP + phosphate + 5 H(+)(out). In terms of biological role, produces ATP from ADP in the presence of a proton gradient across the membrane. The catalytic sites are hosted primarily by the beta subunits. The sequence is that of ATP synthase subunit beta from Roseiflexus castenholzii (strain DSM 13941 / HLO8).